We begin with the raw amino-acid sequence, 483 residues long: Probable glycosyltransferase 6 (483 aa).

The Cytoplasmic portion of the chain corresponds to 1–40 (MAASETAPFGVSAASKGGGGVAGARAQHGQLAVAGRVHDA). The chain crosses the membrane as a helical; Signal-anchor for type II membrane protein span at residues 41–61 (LVFAAGAVAAVLVLLATASFL). Over 62–483 (SPMPVTNLVA…PLPFDYPAAR (422 aa)) the chain is Lumenal. N144 is a glycosylation site (N-linked (GlcNAc...) asparagine).

The protein belongs to the glycosyltransferase 34 family.

The protein localises to the golgi apparatus membrane. Probable glycosyltransferase that may be involved in the biosynthesis of xyloglucan. The sequence is that of Probable glycosyltransferase 6 from Oryza sativa subsp. indica (Rice).